The chain runs to 1151 residues: Zinc finger protein ZFPM2 (1151 aa).

The span at 1–13 (MSRRKQSKPRQIK) shows a compositional bias: basic residues. The segment at 1–102 (MSRRKQSKPR…ETDDWDGPGE (102 aa)) is disordered. Composition is skewed to acidic residues over residues 18-33 (DAIEDEEEECPSEETD) and 70-82 (EGIQETAESDGDT). The segment at 244–277 (IVNKDIFPCKSCGIWYRSERNLQAHLMYYCSGRQ) adopts a CCHC FOG-type 1 zinc-finger fold. Zn(2+)-binding residues include cysteine 252, cysteine 255, histidine 268, and cysteine 273. The segment at 296–320 (SLCPFPQCTKSFSNARALEMHLNSH) adopts a C2H2-type 1 zinc-finger fold. Lysine 324 is covalently cross-linked (Glycyl lysine isopeptide (Lys-Gly) (interchain with G-Cter in SUMO1)). 2 C2H2-type zinc fingers span residues 335-357 (LKCTVCSYTADSVINFHQHLFSH) and 363-385 (FRCNHCHFGFQTQRELLQHQELH). A disordered region spans residues 389–487 (GKLPRESDME…RLASSPVQPN (99 aa)). 2 stretches are compositionally biased toward polar residues: residues 401–410 (PSATEDSLQP) and 419–431 (ELPQSQKAMQTKD). Lysine 444 is covalently cross-linked (Glycyl lysine isopeptide (Lys-Gly) (interchain with G-Cter in SUMO2)). The span at 447-485 (LFLTNQRPEIQPTTNKQSFSYTKIKSEPSSPRLASSPVQ) shows a compositional bias: polar residues. Lysine 471 participates in a covalent cross-link: Glycyl lysine isopeptide (Lys-Gly) (interchain with G-Cter in SUMO1). Serine 532 is subject to Phosphoserine. The segment at 542–575 (PLMPKGATCFECNITFNNLDNYLVHKKHYCSSRW) adopts a CCHC FOG-type 2 zinc-finger fold. Positions 550, 553, 566, and 571 each coordinate Zn(2+). A Phosphoserine modification is found at serine 581. The disordered stretch occupies residues 636–683 (GPNGKGHDKDFSTQTKKLSTSSNNDDKINGKPVDVKNPSVPLVDGESD). A compositionally biased stretch (polar residues) spans 647 to 658 (STQTKKLSTSSN). The segment at 681-714 (ESDPNKTTCEACNITFSRHETYMVHKQYYCATRH) adopts a CCHC FOG-type 3 zinc-finger fold. Zn(2+)-binding residues include cysteine 689, cysteine 692, histidine 705, and cysteine 710. Residues 736–740 (RKRRK) carry the Nuclear localization signal motif. The segment at 829–835 (PIDLSKK) is interaction with CTBP2. The segment at 848–881 (KRLLDYHECTVCKISFNKVENYLAHKQNFCPVTA) adopts a CCHC FOG-type 4 zinc-finger fold. Zn(2+) is bound by residues cysteine 856, cysteine 859, histidine 872, and cysteine 877. Serine 904 carries the phosphoserine modification. Residues lysine 915 and lysine 955 each participate in a glycyl lysine isopeptide (Lys-Gly) (interchain with G-Cter in SUMO1) cross-link. Position 1014 is a phosphoserine (serine 1014). The tract at residues 1051–1095 (DERPAANPQQENISQNPQHEDDHKSPSWISENPLAANENVSPGIP) is disordered. A compositionally biased stretch (polar residues) spans 1057 to 1067 (NPQQENISQNP). The CCHC FOG-type 5 zinc-finger motif lies at 1113 to 1146 (QAPTSGKYCRLCDIQFNNLSNFITHKKFYCSSHA). Zn(2+)-binding residues include cysteine 1121, cysteine 1124, histidine 1137, and cysteine 1142.

The protein belongs to the FOG (Friend of GATA) family. In terms of assembly, interacts with the N-terminal zinc-finger of GATA4, GATA5 and probably GATA6. Interacts with retinoid nuclear receptor RXRA when ligand bound. Interacts with corepressor CTBP2; this interaction is however not essential for corepressor activity. Able to bind GATA1 in vitro. Interacts with NR2F2 and NR2F6. Interacts with ATOH8; mediates indirect interaction with GATA4. Sumoylation reduces transcriptional repression activity. As to expression, widely expressed at low level.

It localises to the nucleus. In terms of biological role, transcription regulator that plays a central role in heart morphogenesis and development of coronary vessels from epicardium, by regulating genes that are essential during cardiogenesis. Essential cofactor that acts via the formation of a heterodimer with transcription factors of the GATA family GATA4, GATA5 and GATA6. Such heterodimer can both activate or repress transcriptional activity, depending on the cell and promoter context. Also required in gonadal differentiation, possibly be regulating expression of SRY. Probably acts a corepressor of NR2F2. This is Zinc finger protein ZFPM2 (ZFPM2) from Homo sapiens (Human).